The chain runs to 573 residues: Phosphoenolpyruvate-protein phosphotransferase (573 aa).

Histidine 190 (tele-phosphohistidine intermediate) is an active-site residue. 2 residues coordinate phosphoenolpyruvate: arginine 297 and arginine 333. The Mg(2+) site is built by glutamate 432 and aspartate 456. Phosphoenolpyruvate contacts are provided by residues 455 to 456 (ND) and arginine 466. Cysteine 503 serves as the catalytic Proton donor.

Belongs to the PEP-utilizing enzyme family. In terms of assembly, homodimer. Mg(2+) is required as a cofactor.

The protein resides in the cytoplasm. The enzyme catalyses L-histidyl-[protein] + phosphoenolpyruvate = N(pros)-phospho-L-histidyl-[protein] + pyruvate. Functionally, general (non sugar-specific) component of the phosphoenolpyruvate-dependent sugar phosphotransferase system (sugar PTS). This major carbohydrate active-transport system catalyzes the phosphorylation of incoming sugar substrates concomitantly with their translocation across the cell membrane. Enzyme I transfers the phosphoryl group from phosphoenolpyruvate (PEP) to the phosphoryl carrier protein (HPr). The chain is Phosphoenolpyruvate-protein phosphotransferase (ptsI) from Priestia megaterium (Bacillus megaterium).